A 457-amino-acid chain; its full sequence is Multidrug resistance protein MdtK (457 aa).

The next 12 membrane-spanning stretches (helical) occupy residues 11 to 31, 53 to 73, 93 to 113, 127 to 147, 160 to 180, 189 to 209, 243 to 263, 276 to 296, 314 to 334, 350 to 370, 387 to 407, and 418 to 438; these read LLAL…MGFV, IWLP…PVIA, WLAG…GYII, AVGY…FQVA, GMVM…IFIY, GGVG…LAMV, LPIA…ALLV, IALN…AAVT, AART…IFTV, VVTL…SDSI, IFYI…YILA, and PAGF…MMML.

It belongs to the multi antimicrobial extrusion (MATE) (TC 2.A.66.1) family. MdtK subfamily.

Its subcellular location is the cell inner membrane. Its function is as follows. Multidrug efflux pump that functions probably as a Na(+)/drug antiporter. The polypeptide is Multidrug resistance protein MdtK (Escherichia coli O45:K1 (strain S88 / ExPEC)).